The sequence spans 272 residues: MPGDHRRIRGPEESQPPQLYAADEEEAPGTRDPTRLRPVYARAGLLSQAKGSAYLEAGGTKVLCAVSGPRQAEGGERGGGPAGAGGEAPAALRGRLLCDFRRAPFAGRRRRAPPGGCEERELALALQEALEPAVRLGRYPRAQLEVSALLLEDGGSALAAALTAAALALADAGVEMYDLVVGCGLSLAPGPAPTWLLDPTRLEEERAAAGLTVALMPVLNQVAGLLGSGEGGLTESWAEAVRLGLEGCQRLYPVLQQSLVRAARRRGAAAQP.

The interval Met1–Leu36 is disordered.

Belongs to the RNase PH family. As to quaternary structure, component of the RNA exosome core complex (Exo-9), composed of EXOSC1, EXOSC2, EXOSC3, EXOSC4, EXOSC5, EXOSC6, EXOSC7, EXOSC8 and EXOSC9; within the complex interacts with EXOSC1, EXOSC7 and EXOSC8. The catalytically inactive Exo-9 may associate with the catalytic subunit EXOSC10/RRP6. Exo-9 may associate with DIS3 to form the nucleolar exosome complex, or DIS3L to form the cytoplasmic exosome complex. Exo-9 is formed by a hexameric base ring consisting of the heterodimers EXOSC4-EXOSC9, EXOSC5-EXOSC8 and EXOSC6-EXOSC7, and a cap ring consisting of EXOSC1, EXOSC2 and EXOSC3. The RNA exosome complex associates with cofactors EXOSC10/RRP6, C1D/RRP47, MPHOSPH6/MPP6 and MTREX/MTR4.

The protein localises to the cytoplasm. It is found in the nucleus. The protein resides in the nucleolus. Functionally, non-catalytic component of the RNA exosome complex which has 3'-&gt;5' exoribonuclease activity and participates in a multitude of cellular RNA processing and degradation events. In the nucleus, the RNA exosome complex is involved in proper maturation of stable RNA species such as rRNA, snRNA and snoRNA, in the elimination of RNA processing by-products and non-coding 'pervasive' transcripts, such as antisense RNA species and promoter-upstream transcripts (PROMPTs), and of mRNAs with processing defects, thereby limiting or excluding their export to the cytoplasm. The RNA exosome may be involved in Ig class switch recombination (CSR) and/or Ig variable region somatic hypermutation (SHM) by targeting AICDA deamination activity to transcribed dsDNA substrates. In the cytoplasm, the RNA exosome complex is involved in general mRNA turnover and specifically degrades inherently unstable mRNAs containing AU-rich elements (AREs) within their 3' untranslated regions, and in RNA surveillance pathways, preventing translation of aberrant mRNAs. It seems to be involved in degradation of histone mRNA. The catalytic inactive RNA exosome core complex of 9 subunits (Exo-9) is proposed to play a pivotal role in the binding and presentation of RNA for ribonucleolysis, and to serve as a scaffold for the association with catalytic subunits and accessory proteins or complexes. The chain is Exosome complex component MTR3 (EXOSC6) from Homo sapiens (Human).